A 167-amino-acid chain; its full sequence is NAD(P)H-quinone oxidoreductase subunit I, chloroplastic (167 aa).

4Fe-4S ferredoxin-type domains lie at 55 to 84 and 95 to 124; these read GRIH…VDWK and LNYS…MTEE. [4Fe-4S] cluster is bound by residues C64, C67, C70, C74, C104, C107, C110, and C114.

Belongs to the complex I 23 kDa subunit family. In terms of assembly, NDH is composed of at least 16 different subunits, 5 of which are encoded in the nucleus. The cofactor is [4Fe-4S] cluster.

It localises to the plastid. It is found in the chloroplast thylakoid membrane. The catalysed reaction is a plastoquinone + NADH + (n+1) H(+)(in) = a plastoquinol + NAD(+) + n H(+)(out). It catalyses the reaction a plastoquinone + NADPH + (n+1) H(+)(in) = a plastoquinol + NADP(+) + n H(+)(out). Its function is as follows. NDH shuttles electrons from NAD(P)H:plastoquinone, via FMN and iron-sulfur (Fe-S) centers, to quinones in the photosynthetic chain and possibly in a chloroplast respiratory chain. The immediate electron acceptor for the enzyme in this species is believed to be plastoquinone. Couples the redox reaction to proton translocation, and thus conserves the redox energy in a proton gradient. In Eucalyptus globulus subsp. globulus (Tasmanian blue gum), this protein is NAD(P)H-quinone oxidoreductase subunit I, chloroplastic.